The primary structure comprises 80 residues: Exodeoxyribonuclease 7 small subunit (80 aa).

The protein belongs to the XseB family. As to quaternary structure, heterooligomer composed of large and small subunits.

The protein localises to the cytoplasm. It catalyses the reaction Exonucleolytic cleavage in either 5'- to 3'- or 3'- to 5'-direction to yield nucleoside 5'-phosphates.. Bidirectionally degrades single-stranded DNA into large acid-insoluble oligonucleotides, which are then degraded further into small acid-soluble oligonucleotides. This is Exodeoxyribonuclease 7 small subunit from Aliivibrio salmonicida (strain LFI1238) (Vibrio salmonicida (strain LFI1238)).